Here is a 444-residue protein sequence, read N- to C-terminus: Maturase K (444 aa).

The protein belongs to the intron maturase 2 family. MatK subfamily.

It localises to the plastid. Its subcellular location is the chloroplast. In terms of biological role, usually encoded in the trnK tRNA gene intron. Probably assists in splicing its own and other chloroplast group II introns. In Chamaecyparis lawsoniana (Lawson false cypress), this protein is Maturase K.